The chain runs to 532 residues: GH3 domain-containing protein (532 aa).

Residues 1 to 18 (MLLLWLLLLLLLLVPLLA) form the signal peptide. The segment at 100–123 (LTQTSHTQEQESEETLPSPASPQY) is disordered. N-linked (GlcNAc...) asparagine glycosylation is found at N356 and N451.

This sequence belongs to the GH3 family. As to expression, highly expressed in mammary tissues from mature virgins and at day 13 of pregnancy, and at lower level during lactation. Expressed at intermediate level in liver. Expressed at lower level in kidney, heart and brain.

Its subcellular location is the endoplasmic reticulum. The protein resides in the nucleus envelope. This Mus musculus (Mouse) protein is GH3 domain-containing protein (Ghdc).